The sequence spans 978 residues: Macrophage colony-stimulating factor 1 receptor (978 aa).

The first 19 residues, 1–19 (MELGPPLVLLLATVWHGQG), serve as a signal peptide directing secretion. Topologically, residues 20-515 (APVIEPSGPE…QLPDESLFTP (496 aa)) are extracellular. 5 consecutive Ig-like C2-type domains span residues 24 to 104 (EPSG…VKDP), 107 to 197 (SWNL…KVNR), 204 to 298 (QIKL…VVES), 299 to 397 (AYLN…LTLR), and 398 to 503 (YPPE…SLGQ). Disulfide bonds link Cys42–Cys84, Cys127–Cys177, and Cys224–Cys278. Asn45 and Asn73 each carry an N-linked (GlcNAc...) asparagine glycan. Residues Asn302, Asn335, Asn389, Asn410, Asn449, Asn478, and Asn491 are each glycosylated (N-linked (GlcNAc...) asparagine). A disulfide bridge connects residues Cys417 and Cys483. Residues 516–536 (VVVACMSVMSLLVLLLLLLLY) form a helical membrane-spanning segment. Residues 537 to 978 (KYKQKPKYQV…LQPNNYQFAC (442 aa)) lie on the Cytoplasmic side of the membrane. The segment at 540 to 572 (QKPKYQVRWKIIERYEGNSYTFIDPTQLPYNEK) is regulatory juxtamembrane domain. Residues Tyr544 and Tyr559 each carry the phosphotyrosine; by autocatalysis modification. The Protein kinase domain maps to 580 to 914 (LQFGKTLGAG…CFLLQEQARL (335 aa)). ATP-binding positions include 586 to 594 (LGAGAFGKV) and Lys614. A phosphotyrosine; by autocatalysis mark is found at Tyr697 and Tyr706. Ser711 is subject to Phosphoserine. A Phosphotyrosine; by autocatalysis modification is found at Tyr721. Residue Asp776 is the Proton acceptor of the active site. The activation loop stretch occupies residues 794 to 816 (DFGLARDIMNDSNYVVKGNARLP). Residues Tyr807 and Tyr921 each carry the phosphotyrosine; by autocatalysis modification. The tract at residues 921-957 (YANLPSSGGSSGSDSGGGSSGGSSSEPEEESSSEHLA) is disordered. Residues 929 to 941 (GSSGSDSGGGSSG) show a composition bias toward gly residues. At Tyr974 the chain carries Phosphotyrosine; by autocatalysis.

This sequence belongs to the protein kinase superfamily. Tyr protein kinase family. CSF-1/PDGF receptor subfamily. Monomer. Homodimer. Interacts with CSF1 and IL34. Interaction with dimeric CSF1 or IL34 leads to receptor homodimerization. Interacts with INPPL1/SHIP2 and THOC5. Interacts (tyrosine phosphorylated) with PLCG2 (via SH2 domain). Interacts (tyrosine phosphorylated) with PIK3R1 (via SH2 domain). Interacts (tyrosine phosphorylated) with FYN, YES1 and SRC (via SH2 domain). Interacts (tyrosine phosphorylated) with CBL, GRB2 and SLA2. Autophosphorylated in response to CSF1 or IL34 binding. Phosphorylation at Tyr-559 is important for normal down-regulation of signaling by ubiquitination, internalization and degradation. Phosphorylation at Tyr-559 and Tyr-807 is important for interaction with SRC family members, including FYN, YES1 and SRC, and for subsequent activation of these protein kinases. Phosphorylation at Tyr-697 and Tyr-921 is important for interaction with GRB2. Phosphorylation at Tyr-721 is important for interaction with PIK3R1. Phosphorylation at Tyr-721 and Tyr-807 is important for interaction with PLCG2. Phosphorylation at Tyr-974 is important for interaction with CBL. Dephosphorylation by PTPN2 negatively regulates downstream signaling and macrophage differentiation. Post-translationally, ubiquitinated. Becomes rapidly polyubiquitinated after autophosphorylation, leading to its degradation.

It localises to the cell membrane. It carries out the reaction L-tyrosyl-[protein] + ATP = O-phospho-L-tyrosyl-[protein] + ADP + H(+). With respect to regulation, present in an inactive conformation in the absence of bound ligand. CSF1 or IL34 binding leads to dimerization and activation by autophosphorylation on tyrosine residues. Its function is as follows. Tyrosine-protein kinase that acts as a cell-surface receptor for CSF1 and IL34 and plays an essential role in the regulation of survival, proliferation and differentiation of hematopoietic precursor cells, especially mononuclear phagocytes, such as macrophages and monocytes. Promotes the release of pro-inflammatory chemokines in response to IL34 and CSF1, and thereby plays an important role in innate immunity and in inflammatory processes. Plays an important role in the regulation of osteoclast proliferation and differentiation, the regulation of bone resorption, and is required for normal bone and tooth development. Required for normal male and female fertility, and for normal development of milk ducts and acinar structures in the mammary gland during pregnancy. Promotes reorganization of the actin cytoskeleton, regulates formation of membrane ruffles, cell adhesion and cell migration, and promotes cancer cell invasion. Activates several signaling pathways in response to ligand binding, including the ERK1/2 and the JNK pathway. Phosphorylates PIK3R1, PLCG2, GRB2, SLA2 and CBL. Activation of PLCG2 leads to the production of the cellular signaling molecules diacylglycerol and inositol 1,4,5-trisphosphate, that then lead to the activation of protein kinase C family members, especially PRKCD. Phosphorylation of PIK3R1, the regulatory subunit of phosphatidylinositol 3-kinase, leads to activation of the AKT1 signaling pathway. Activated CSF1R also mediates activation of the MAP kinases MAPK1/ERK2 and/or MAPK3/ERK1, and of the SRC family kinases SRC, FYN and YES1. Activated CSF1R transmits signals both via proteins that directly interact with phosphorylated tyrosine residues in its intracellular domain, or via adapter proteins, such as GRB2. Promotes activation of STAT family members STAT3, STAT5A and/or STAT5B. Promotes tyrosine phosphorylation of SHC1 and INPP5D/SHIP-1. Receptor signaling is down-regulated by protein phosphatases, such as INPP5D/SHIP-1, that dephosphorylate the receptor and its downstream effectors, and by rapid internalization of the activated receptor. In the central nervous system, may play a role in the development of microglia macrophages. The polypeptide is Macrophage colony-stimulating factor 1 receptor (Csf1r) (Rattus norvegicus (Rat)).